Reading from the N-terminus, the 430-residue chain is MSQLQSLRGMVDLLPETLQCWQAVEAVAREHFRRSGFGEIRTPLLETTDLFCRGIGEGTDVVGKEMYSFTDRGERACTLRPEGTASVVRAALQHGLLSQGAQKLWYAGPMFRYERPQAGRQRQFHQIGVEWLGAESARSDVEVIALAWDLLAQLGVGGLELEINSLGTPEDRQAYRTALVAWLEQRLDQLDDDSRARLSTNPLRILDSKNKDTQALLEQAPTLADALSSESRQRFDAVQQGLTALGIPFRLNPRLVRGLDYYGHTAFEITSDQLGAQATVCGGGRYNGLIAQLGGAPTPAIGWALGMERLLLVLEAAATADPDGAAARLVATSAPDAYVINRGDQAETMALTLTRGLRAAGLAVELDGSGSAFGKQFKRADRCGARWALVLGDDEAARAEVRLKPLQHEGEDRSWAVADIAAIVETLRTP.

This sequence belongs to the class-II aminoacyl-tRNA synthetase family. Homodimer.

It localises to the cytoplasm. It carries out the reaction tRNA(His) + L-histidine + ATP = L-histidyl-tRNA(His) + AMP + diphosphate + H(+). This Parasynechococcus marenigrum (strain WH8102) protein is Histidine--tRNA ligase.